We begin with the raw amino-acid sequence, 1485 residues long: Formin BNR1 (1485 aa).

Disordered stretches follow at residues His65 to His88, His226 to Thr248, and Ala549 to Glu575. Residues Asn110–Gly636 form the GBD/FH3 domain. Polar residues predominate over residues Thr231–Thr248. Residues Leu553–Asp564 show a composition bias toward acidic residues. Residues Ala660–Ala734 are a coiled coil. The tract at residues Gly746–Pro874 is disordered. The 416-residue stretch at Val953 to Asp1368 folds into the FH2 domain. Coiled-coil stretches lie at residues His1240–Asn1312 and Gln1351–Glu1382. The segment at Leu1447–Ser1471 is disordered.

The protein belongs to the formin homology family. BNI1 subfamily. In terms of assembly, interacts with IQG1.

Its subcellular location is the bud neck. It localises to the cell septum. Functionally, may organize microtubules by mediating spindle positioning and movement in the budding process. Required for cytokinesis and the maintenance of polarized hyphal growth. This Candida albicans (strain SC5314 / ATCC MYA-2876) (Yeast) protein is Formin BNR1 (BNR1).